The chain runs to 202 residues: dTTP/UTP pyrophosphatase (202 aa).

Asp76 serves as the catalytic Proton acceptor.

This sequence belongs to the Maf family. YhdE subfamily. Requires a divalent metal cation as cofactor.

It is found in the cytoplasm. The enzyme catalyses dTTP + H2O = dTMP + diphosphate + H(+). It catalyses the reaction UTP + H2O = UMP + diphosphate + H(+). Nucleoside triphosphate pyrophosphatase that hydrolyzes dTTP and UTP. May have a dual role in cell division arrest and in preventing the incorporation of modified nucleotides into cellular nucleic acids. The protein is dTTP/UTP pyrophosphatase of Neisseria meningitidis serogroup B (strain ATCC BAA-335 / MC58).